The primary structure comprises 127 residues: Holo-[acyl-carrier-protein] synthase (127 aa).

Residues Asp-8 and Glu-59 each contribute to the Mg(2+) site.

The protein belongs to the P-Pant transferase superfamily. AcpS family. Mg(2+) serves as cofactor.

Its subcellular location is the cytoplasm. It catalyses the reaction apo-[ACP] + CoA = holo-[ACP] + adenosine 3',5'-bisphosphate + H(+). Functionally, transfers the 4'-phosphopantetheine moiety from coenzyme A to a Ser of acyl-carrier-protein. The sequence is that of Holo-[acyl-carrier-protein] synthase from Rickettsia bellii (strain OSU 85-389).